The sequence spans 634 residues: Chaperone protein HtpG (634 aa).

Residues 1–344 are a; substrate-binding; that stretch reads MNETVANNKE…SNDLPLNVSR (344 aa). The segment at 345–561 is b; it reads EILQDNKVTQ…DFEMGTQMAK (217 aa). Residues 562–634 are c; the sequence is LLAAAGQAVP…TAINSLLTKG (73 aa).

It belongs to the heat shock protein 90 family. As to quaternary structure, homodimer.

The protein localises to the cytoplasm. Its function is as follows. Molecular chaperone. Has ATPase activity. The protein is Chaperone protein HtpG of Vibrio vulnificus (strain CMCP6).